We begin with the raw amino-acid sequence, 907 residues long: Translation initiation factor IF-2 (907 aa).

The segment at D26 to D317 is disordered. Basic and acidic residues-rich tracts occupy residues G28 to K44 and S101 to Y248. The span at K299 to K308 shows a compositional bias: basic residues. One can recognise a tr-type G domain in the interval P406–T575. A G1 region spans residues G415–T422. Position 415–422 (G415–T422) interacts with GTP. The tract at residues G440–H444 is G2. The G3 stretch occupies residues D461 to G464. GTP contacts are provided by residues D461–H465 and N515–D518. The G4 stretch occupies residues N515–D518. The G5 stretch occupies residues S551–K553.

This sequence belongs to the TRAFAC class translation factor GTPase superfamily. Classic translation factor GTPase family. IF-2 subfamily.

The protein localises to the cytoplasm. One of the essential components for the initiation of protein synthesis. Protects formylmethionyl-tRNA from spontaneous hydrolysis and promotes its binding to the 30S ribosomal subunits. Also involved in the hydrolysis of GTP during the formation of the 70S ribosomal complex. This chain is Translation initiation factor IF-2, found in Vibrio vulnificus (strain YJ016).